The sequence spans 122 residues: Large ribosomal subunit protein uL18 (122 aa).

The protein belongs to the universal ribosomal protein uL18 family. As to quaternary structure, part of the 50S ribosomal subunit; part of the 5S rRNA/L5/L18/L25 subcomplex. Contacts the 5S and 23S rRNAs.

In terms of biological role, this is one of the proteins that bind and probably mediate the attachment of the 5S RNA into the large ribosomal subunit, where it forms part of the central protuberance. This chain is Large ribosomal subunit protein uL18, found in Leptospira interrogans serogroup Icterohaemorrhagiae serovar copenhageni (strain Fiocruz L1-130).